Here is a 515-residue protein sequence, read N- to C-terminus: ATP synthase subunit alpha (515 aa).

169–176 (GDRQTGKT) serves as a coordination point for ATP.

Belongs to the ATPase alpha/beta chains family. As to quaternary structure, F-type ATPases have 2 components, CF(1) - the catalytic core - and CF(0) - the membrane proton channel. CF(1) has five subunits: alpha(3), beta(3), gamma(1), delta(1), epsilon(1). CF(0) has three main subunits: a(1), b(2) and c(9-12). The alpha and beta chains form an alternating ring which encloses part of the gamma chain. CF(1) is attached to CF(0) by a central stalk formed by the gamma and epsilon chains, while a peripheral stalk is formed by the delta and b chains.

It is found in the cell inner membrane. The enzyme catalyses ATP + H2O + 4 H(+)(in) = ADP + phosphate + 5 H(+)(out). In terms of biological role, produces ATP from ADP in the presence of a proton gradient across the membrane. The alpha chain is a regulatory subunit. The protein is ATP synthase subunit alpha of Myxococcus xanthus.